Reading from the N-terminus, the 129-residue chain is D-ribose pyranase (129 aa).

The Proton donor role is filled by His-20. Residues Asp-28, His-96, and 118-120 (YAN) contribute to the substrate site.

The protein belongs to the RbsD / FucU family. RbsD subfamily. Homodecamer.

It localises to the cytoplasm. It carries out the reaction beta-D-ribopyranose = beta-D-ribofuranose. Its pathway is carbohydrate metabolism; D-ribose degradation; D-ribose 5-phosphate from beta-D-ribopyranose: step 1/2. Its function is as follows. Catalyzes the interconversion of beta-pyran and beta-furan forms of D-ribose. The polypeptide is D-ribose pyranase (Streptomyces avermitilis (strain ATCC 31267 / DSM 46492 / JCM 5070 / NBRC 14893 / NCIMB 12804 / NRRL 8165 / MA-4680)).